A 284-amino-acid polypeptide reads, in one-letter code: Pseudouridine-5'-phosphate glycosidase (284 aa).

The Proton donor role is filled by Glu-8. The substrate site is built by Lys-69 and Val-89. Asp-119 provides a ligand contact to Mn(2+). 121-123 (SQD) lines the substrate pocket. The Nucleophile role is filled by Lys-140.

Belongs to the pseudouridine-5'-phosphate glycosidase family. Homotrimer. It depends on Mn(2+) as a cofactor.

The catalysed reaction is D-ribose 5-phosphate + uracil = psi-UMP + H2O. In terms of biological role, catalyzes the reversible cleavage of pseudouridine 5'-phosphate (PsiMP) to ribose 5-phosphate and uracil. Functions biologically in the cleavage direction, as part of a pseudouridine degradation pathway. The chain is Pseudouridine-5'-phosphate glycosidase from Pseudothermotoga lettingae (strain ATCC BAA-301 / DSM 14385 / NBRC 107922 / TMO) (Thermotoga lettingae).